We begin with the raw amino-acid sequence, 586 residues long: SPbeta prophage-derived uncharacterized protein YorA (586 aa).

PbH1 repeat units lie at residues 108 to 147 (AENVIIRGGRIIGDRYQHDYSLIDTDRKTHEWGFGIHVHG), 148 to 170 (SKNVLIENVQISDCIGDNIWIAA), 184 to 206 (SKSVTVRKCELKRGRRNNLATNG), 207 to 235 (CEGLLVEDCDIEEAGGDTIGPQLGIDLEG), 246 to 268 (PYELTISDCRFRKNGRGSVTAHT), 288 to 313 (STDVSIKGNKIINEGGSKEYGIDSVG), 320 to 341 (GNRIQITDNNIQGFKIGMMIRG), 364 to 384 (AEDVSISNNRIQDSDCIQIQV), 387 to 410 (SSDIKVSNNKGKGTTSAYAIKVMD), 411 to 432 (SNDVKFLNNTFSNLYGGLYCER), 435 to 456 (AVRIKLNDFLLSGKGYGIYWDK), 481 to 504 (MYNIRISDNQIYNCKAIIAIHLIG), and 505 to 531 (GSEHMVRGNEIMFNRDSDQGYGIYLNG).

This Bacillus subtilis (strain 168) protein is SPbeta prophage-derived uncharacterized protein YorA (yorA).